We begin with the raw amino-acid sequence, 232 residues long: V-type ATP synthase subunit E (232 aa).

The protein belongs to the V-ATPase E subunit family.

Produces ATP from ADP in the presence of a proton gradient across the membrane. The sequence is that of V-type ATP synthase subunit E (atpE) from Treponema pallidum (strain Nichols).